Consider the following 628-residue polypeptide: Serine/threonine-protein kinase Nek11 (628 aa).

Residues 30–288 (YVLQQKLGSG…AADILKAPYM (259 aa)) enclose the Protein kinase domain. Residues 36–44 (LGSGSFGTV) and K62 each bind ATP. The active-site Proton acceptor is D159. Residue S274 is modified to Phosphoserine; by CHEK1. Positions 347–385 (WLRKLQAADERARRLKKIAEENYKENDKRMQALRSRNVG) form a coiled coil. A compositionally biased stretch (acidic residues) spans 452 to 463 (SEDSEEQEEEMI). Positions 452–475 (SEDSEEQEEEMIFSEAGGDTKEEE) are disordered.

The protein belongs to the protein kinase superfamily. NEK Ser/Thr protein kinase family. NIMA subfamily. Interacts with NEK2. Requires Mn(2+) as cofactor. Mg(2+) is required as a cofactor. Phosphorylated by NEK2. Phosphorylation at Ser-274 is important for its activation.

The protein resides in the nucleus. It is found in the nucleolus. It catalyses the reaction L-seryl-[protein] + ATP = O-phospho-L-seryl-[protein] + ADP + H(+). The enzyme catalyses L-threonyl-[protein] + ATP = O-phospho-L-threonyl-[protein] + ADP + H(+). With respect to regulation, autorepressed by intramolecular binding of the C-terminus which dissociates following phosphorylation by NEK2. Activated in response to DNA damage. Inhibited by zinc. Protein kinase which plays an important role in the G2/M checkpoint response to DNA damage. Controls degradation of CDC25A by directly phosphorylating it on residues whose phosphorylation is required for BTRC-mediated polyubiquitination and degradation. This chain is Serine/threonine-protein kinase Nek11, found in Mus musculus (Mouse).